A 414-amino-acid chain; its full sequence is Serine hydroxymethyltransferase (414 aa).

Residues L121 and G125–L127 contribute to the (6S)-5,6,7,8-tetrahydrofolate site. An N6-(pyridoxal phosphate)lysine modification is found at K229.

This sequence belongs to the SHMT family. Homodimer. Requires pyridoxal 5'-phosphate as cofactor.

It is found in the cytoplasm. It carries out the reaction (6R)-5,10-methylene-5,6,7,8-tetrahydrofolate + glycine + H2O = (6S)-5,6,7,8-tetrahydrofolate + L-serine. It functions in the pathway one-carbon metabolism; tetrahydrofolate interconversion. The protein operates within amino-acid biosynthesis; glycine biosynthesis; glycine from L-serine: step 1/1. Catalyzes the reversible interconversion of serine and glycine with tetrahydrofolate (THF) serving as the one-carbon carrier. This reaction serves as the major source of one-carbon groups required for the biosynthesis of purines, thymidylate, methionine, and other important biomolecules. Also exhibits THF-independent aldolase activity toward beta-hydroxyamino acids, producing glycine and aldehydes, via a retro-aldol mechanism. This is Serine hydroxymethyltransferase from Polynucleobacter necessarius subsp. necessarius (strain STIR1).